The chain runs to 467 residues: Congo red hypersensitive protein 2 (467 aa).

Residues 1–23 (MAIVNSWLICLVSIFSFVVRVEA) form the signal peptide. The N-linked (GlcNAc...) asparagine glycan is linked to asparagine 28. Cysteine 56 and cysteine 67 are oxidised to a cystine. The 218-residue stretch at 63–280 (SHDSCMPVPI…WSGGEINWDA (218 aa)) folds into the GH16 domain. Asparagine 96 carries N-linked (GlcNAc...) asparagine glycosylation. Glutamate 166 functions as the Nucleophile in the catalytic mechanism. Glutamate 170 (proton donor) is an active-site residue. Glutamate 170 contributes to the chitin binding site. Asparagine 190, asparagine 196, asparagine 233, and asparagine 237 each carry an N-linked (GlcNAc...) asparagine glycan. Tryptophan 257 contributes to the chitin binding site. Asparagine 261 carries N-linked (GlcNAc...) asparagine glycosylation. Residue threonine 268 coordinates chitin. N-linked (GlcNAc...) asparagine glycosylation is found at asparagine 297 and asparagine 310. Positions 337 to 444 (MDSDEGSGLD…SSSTSSMSGN (108 aa)) are disordered. The span at 351–444 (ATTSSTQKSS…SSSTSSMSGN (94 aa)) shows a compositional bias: low complexity. Asparagine 445 carries GPI-anchor amidated asparagine lipidation. Positions 446–467 (AGANVAANWRLTVLCVILGYVL) are cleaved as a propeptide — removed in mature form.

Belongs to the glycosyl hydrolase 16 family. CRH1 subfamily. The GPI-anchor is attached to the protein in the endoplasmic reticulum and serves to target the protein to the cell surface. There, the glucosamine-inositol phospholipid moiety is cleaved off and the GPI-modified mannoprotein is covalently attached via its lipidless GPI glycan remnant to the 1,6-beta-glucan of the outer cell wall layer.

The protein localises to the secreted. The protein resides in the cell wall. It is found in the membrane. The enzyme catalyses Random endo-hydrolysis of N-acetyl-beta-D-glucosaminide (1-&gt;4)-beta-linkages in chitin and chitodextrins.. Its function is as follows. Dual chitinase/transglycosylase that plays a role in cell wall architecture. Chitinase and transglycosylase activities are coupled. Required for the polysaccharide cross-linking at the septa and the cell wall. More specifically, transfers chitin to both beta(1-3)- and beta(1-6)glucan in the cell wall. The minimal number of intact hexopyranose units required in the molecule of the acceptor oligosaccharide is two and the effectivity of the acceptor increased with the increasing length of its oligosaccharide chain. The chain is Congo red hypersensitive protein 2 from Saccharomyces cerevisiae (strain ATCC 204508 / S288c) (Baker's yeast).